The chain runs to 357 residues: S-adenosylmethionine:tRNA ribosyltransferase-isomerase (357 aa).

Belongs to the QueA family. Monomer.

It localises to the cytoplasm. The catalysed reaction is 7-aminomethyl-7-carbaguanosine(34) in tRNA + S-adenosyl-L-methionine = epoxyqueuosine(34) in tRNA + adenine + L-methionine + 2 H(+). The protein operates within tRNA modification; tRNA-queuosine biosynthesis. Functionally, transfers and isomerizes the ribose moiety from AdoMet to the 7-aminomethyl group of 7-deazaguanine (preQ1-tRNA) to give epoxyqueuosine (oQ-tRNA). This is S-adenosylmethionine:tRNA ribosyltransferase-isomerase from Hamiltonella defensa subsp. Acyrthosiphon pisum (strain 5AT).